Reading from the N-terminus, the 145-residue chain is 3-dehydroquinate dehydratase (145 aa).

Tyr-24 acts as the Proton acceptor in catalysis. Residues Asn-76, His-82, and Asp-89 each coordinate substrate. Residue His-102 is the Proton donor of the active site. Residues 103–104 (VS) and Arg-113 each bind substrate.

Belongs to the type-II 3-dehydroquinase family. In terms of assembly, homododecamer.

The catalysed reaction is 3-dehydroquinate = 3-dehydroshikimate + H2O. It functions in the pathway metabolic intermediate biosynthesis; chorismate biosynthesis; chorismate from D-erythrose 4-phosphate and phosphoenolpyruvate: step 3/7. In terms of biological role, catalyzes a trans-dehydration via an enolate intermediate. In Herminiimonas arsenicoxydans, this protein is 3-dehydroquinate dehydratase.